Reading from the N-terminus, the 363-residue chain is Fructose-bisphosphate aldolase C (363 aa).

Tyrosine 5 is subject to Phosphotyrosine. Serine 36, serine 39, and serine 45 each carry phosphoserine. Residue arginine 56 coordinates substrate. Lysine 111 bears the N6-acetyllysine mark. Lysine 147 contacts substrate. The Proton acceptor role is filled by glutamate 188. The active-site Schiff-base intermediate with dihydroxyacetone-P is lysine 230.

Belongs to the class I fructose-bisphosphate aldolase family. Homotetramer. Interacts with ATP6V1E1. High expression in the adult brain.

The catalysed reaction is beta-D-fructose 1,6-bisphosphate = D-glyceraldehyde 3-phosphate + dihydroxyacetone phosphate. It functions in the pathway carbohydrate degradation; glycolysis; D-glyceraldehyde 3-phosphate and glycerone phosphate from D-glucose: step 4/4. The protein is Fructose-bisphosphate aldolase C (Aldoc) of Rattus norvegicus (Rat).